Reading from the N-terminus, the 178-residue chain is 2-C-methyl-D-erythritol 2,4-cyclodiphosphate synthase (178 aa).

Residues D24, H26, and H61 each coordinate a divalent metal cation. 24-26 (DSH) serves as a coordination point for 4-CDP-2-C-methyl-D-erythritol 2-phosphate. 150 to 153 (TSGE) provides a ligand contact to 4-CDP-2-C-methyl-D-erythritol 2-phosphate.

The protein belongs to the IspF family. As to quaternary structure, homotrimer. It depends on a divalent metal cation as a cofactor.

The enzyme catalyses 4-CDP-2-C-methyl-D-erythritol 2-phosphate = 2-C-methyl-D-erythritol 2,4-cyclic diphosphate + CMP. It functions in the pathway isoprenoid biosynthesis; isopentenyl diphosphate biosynthesis via DXP pathway; isopentenyl diphosphate from 1-deoxy-D-xylulose 5-phosphate: step 4/6. Involved in the biosynthesis of isopentenyl diphosphate (IPP) and dimethylallyl diphosphate (DMAPP), two major building blocks of isoprenoid compounds. Catalyzes the conversion of 4-diphosphocytidyl-2-C-methyl-D-erythritol 2-phosphate (CDP-ME2P) to 2-C-methyl-D-erythritol 2,4-cyclodiphosphate (ME-CPP) with a corresponding release of cytidine 5-monophosphate (CMP). The sequence is that of 2-C-methyl-D-erythritol 2,4-cyclodiphosphate synthase from Chlamydia trachomatis serovar L2b (strain UCH-1/proctitis).